We begin with the raw amino-acid sequence, 207 residues long: Protein N-terminal glutamine amidohydrolase (207 aa).

Residues cysteine 30, histidine 83, and aspartate 99 contribute to the active site.

It belongs to the NTAQ1 family. In terms of assembly, monomer.

It is found in the cytoplasm. Its subcellular location is the cytosol. The protein resides in the nucleus. The catalysed reaction is N-terminal L-glutaminyl-[protein] + H2O = N-terminal L-glutamyl-[protein] + NH4(+). In terms of biological role, mediates the side-chain deamidation of N-terminal glutamine residues to glutamate, an important step in N-end rule pathway of protein degradation. Conversion of the resulting N-terminal glutamine to glutamate renders the protein susceptible to arginylation, polyubiquitination and degradation as specified by the N-end rule. Does not act on substrates with internal or C-terminal glutamine and does not act on non-glutamine residues in any position. Does not deaminate acetylated N-terminal glutamine. With the exception of proline, all tested second-position residues on substrate peptides do not greatly influence the activity. In contrast, a proline at position 2, virtually abolishes deamidation of N-terminal glutamine. The sequence is that of Protein N-terminal glutamine amidohydrolase (Ntaq1) from Rattus norvegicus (Rat).